We begin with the raw amino-acid sequence, 110 residues long: UPF0339 protein YegP (110 aa).

2 repeat units span residues 10–58 and 61–109.

The protein belongs to the UPF0339 family. Duplicated subfamily.

The protein is UPF0339 protein YegP (yegP) of Escherichia coli (strain K12).